A 250-amino-acid polypeptide reads, in one-letter code: Probable dihydroorotate dehydrogenase B (NAD(+)), electron transfer subunit (250 aa).

The region spanning 1–89 (MINLKIEENV…RGPYGNGFDV (89 aa)) is the FAD-binding FR-type domain. 4 residues coordinate [2Fe-2S] cluster: C200, C205, C208, and C216.

The protein belongs to the PyrK family. In terms of assembly, heterotetramer of 2 PyrK and 2 PyrD type B subunits. It depends on [2Fe-2S] cluster as a cofactor. FAD serves as cofactor.

It functions in the pathway pyrimidine metabolism; UMP biosynthesis via de novo pathway; orotate from (S)-dihydroorotate (NAD(+) route): step 1/1. In terms of biological role, responsible for channeling the electrons from the oxidation of dihydroorotate from the FMN redox center in the PyrD type B subunit to the ultimate electron acceptor NAD(+). The sequence is that of Probable dihydroorotate dehydrogenase B (NAD(+)), electron transfer subunit from Thermoplasma volcanium (strain ATCC 51530 / DSM 4299 / JCM 9571 / NBRC 15438 / GSS1).